Consider the following 316-residue polypeptide: Pantothenate kinase (316 aa).

99 to 106 (GSVAVGKS) contacts ATP.

This sequence belongs to the prokaryotic pantothenate kinase family.

The protein localises to the cytoplasm. The catalysed reaction is (R)-pantothenate + ATP = (R)-4'-phosphopantothenate + ADP + H(+). Its pathway is cofactor biosynthesis; coenzyme A biosynthesis; CoA from (R)-pantothenate: step 1/5. This Pasteurella multocida (strain Pm70) protein is Pantothenate kinase (coaA).